The sequence spans 189 residues: Myb-like protein T (189 aa).

Residues 121 to 172 (NWSPDEQKALMVEVSTLGNKSEINWFFISQQLFLKGISRNARECQRKHESIQ) enclose the Myb-like domain.

The protein is Myb-like protein T (mybT) of Dictyostelium discoideum (Social amoeba).